The chain runs to 218 residues: Probable 1-Cys peroxiredoxin (218 aa).

The 162-residue stretch at 5–166 folds into the Thioredoxin domain; the sequence is WALGDLVPDI…VLRVLDSLQL (162 aa). C47 serves as the catalytic Cysteine sulfenic acid (-SOH) intermediate.

This sequence belongs to the peroxiredoxin family. Prx6 subfamily.

The protein localises to the nucleus. The protein resides in the cytoplasm. It catalyses the reaction a hydroperoxide + [thioredoxin]-dithiol = an alcohol + [thioredoxin]-disulfide + H2O. In terms of biological role, thiol-specific peroxidase that catalyzes the reduction of hydrogen peroxide and organic hydroperoxides to water and alcohols, respectively. Seems to contribute to the inhibition of germination during stress. Associated with the rehydration events involved in the recovery of the desiccation-tolerant moss. The chain is Probable 1-Cys peroxiredoxin from Syntrichia ruralis (Great hairy screw-moss).